Consider the following 395-residue polypeptide: Glutamyl-tRNA reductase (395 aa).

Substrate-binding positions include 45–48 (TCNR), Ser87, 92–94 (EDQ), and Gln98. Cys46 functions as the Nucleophile in the catalytic mechanism. NADP(+) is bound at residue 167 to 172 (GAGEMG).

This sequence belongs to the glutamyl-tRNA reductase family. Homodimer.

It catalyses the reaction (S)-4-amino-5-oxopentanoate + tRNA(Glu) + NADP(+) = L-glutamyl-tRNA(Glu) + NADPH + H(+). The protein operates within porphyrin-containing compound metabolism; protoporphyrin-IX biosynthesis; 5-aminolevulinate from L-glutamyl-tRNA(Glu): step 1/2. In terms of biological role, catalyzes the NADPH-dependent reduction of glutamyl-tRNA(Glu) to glutamate 1-semialdehyde (GSA). This is Glutamyl-tRNA reductase from Methanosphaera stadtmanae (strain ATCC 43021 / DSM 3091 / JCM 11832 / MCB-3).